A 349-amino-acid polypeptide reads, in one-letter code: Core protein VP7 (349 aa).

Residue asparagine 287 is glycosylated (N-linked (GlcNAc...) asparagine; by host).

This sequence belongs to the orbivirus VP7 family. In terms of assembly, homotrimer that assemble in a complex of 260 capsomers on an inner scaffold composed of VP3.

The protein localises to the virion. Functionally, the VP7 protein is one of the five proteins (with VP1, VP3, VP4, and VP6) which form the inner capsid of the virus. The sequence is that of Core protein VP7 (Segment-7) from Antilocapra americana (Pronghorn).